The following is a 151-amino-acid chain: Deoxyuridine 5'-triphosphate nucleotidohydrolase (151 aa).

Residues 70 to 72 (RSG), Asn-83, 87 to 89 (LID), and Met-97 contribute to the substrate site.

The protein belongs to the dUTPase family. Requires Mg(2+) as cofactor.

It carries out the reaction dUTP + H2O = dUMP + diphosphate + H(+). It functions in the pathway pyrimidine metabolism; dUMP biosynthesis; dUMP from dCTP (dUTP route): step 2/2. In terms of biological role, this enzyme is involved in nucleotide metabolism: it produces dUMP, the immediate precursor of thymidine nucleotides and it decreases the intracellular concentration of dUTP so that uracil cannot be incorporated into DNA. The protein is Deoxyuridine 5'-triphosphate nucleotidohydrolase of Tolumonas auensis (strain DSM 9187 / NBRC 110442 / TA 4).